The chain runs to 1790 residues: Protein FAM186A (1790 aa).

Belongs to the FAM186 family.

This chain is Protein FAM186A (FAM186A), found in Mus musculus (Mouse).